Reading from the N-terminus, the 319-residue chain is ATP-dependent 6-phosphofructokinase (319 aa).

Glycine 11 provides a ligand contact to ATP. An ADP-binding site is contributed by 21–25 (RAVVR). ATP-binding positions include 72–73 (RC) and 102–105 (GDGS). Mg(2+) is bound at residue aspartate 103. 125 to 127 (TID) is a binding site for substrate. The active-site Proton acceptor is aspartate 127. Residue arginine 154 coordinates ADP. Substrate is bound by residues arginine 162 and 169 to 171 (MGR). Residues 185–187 (GAE), arginine 211, and 213–215 (KKH) contribute to the ADP site. Residues glutamate 222, arginine 243, and 249–252 (HVQR) contribute to the substrate site.

Belongs to the phosphofructokinase type A (PFKA) family. ATP-dependent PFK group I subfamily. Prokaryotic clade 'B1' sub-subfamily. Homotetramer. It depends on Mg(2+) as a cofactor.

It localises to the cytoplasm. It carries out the reaction beta-D-fructose 6-phosphate + ATP = beta-D-fructose 1,6-bisphosphate + ADP + H(+). It participates in carbohydrate degradation; glycolysis; D-glyceraldehyde 3-phosphate and glycerone phosphate from D-glucose: step 3/4. With respect to regulation, allosterically activated by ADP and other diphosphonucleosides, and allosterically inhibited by phosphoenolpyruvate. In terms of biological role, catalyzes the phosphorylation of D-fructose 6-phosphate to fructose 1,6-bisphosphate by ATP, the first committing step of glycolysis. The protein is ATP-dependent 6-phosphofructokinase of Bacillus cytotoxicus (strain DSM 22905 / CIP 110041 / 391-98 / NVH 391-98).